Consider the following 87-residue polypeptide: DNA-directed RNA polymerase subunit omega (87 aa).

This sequence belongs to the RNA polymerase subunit omega family. The RNAP catalytic core consists of 2 alpha, 1 beta, 1 beta' and 1 omega subunit. When a sigma factor is associated with the core the holoenzyme is formed, which can initiate transcription.

The catalysed reaction is RNA(n) + a ribonucleoside 5'-triphosphate = RNA(n+1) + diphosphate. Its function is as follows. Promotes RNA polymerase assembly. Latches the N- and C-terminal regions of the beta' subunit thereby facilitating its interaction with the beta and alpha subunits. This Pseudomonas savastanoi pv. phaseolicola (strain 1448A / Race 6) (Pseudomonas syringae pv. phaseolicola (strain 1448A / Race 6)) protein is DNA-directed RNA polymerase subunit omega.